The sequence spans 272 residues: Cell shape-determining protein MreC (272 aa).

Residues 1–8 (MNRFKKSK) are Cytoplasmic-facing. Residues 9 to 29 (YVIIVFVTVLLVSALLATTYS) form a helical membrane-spanning segment. Residues 30 to 272 (STIVTKLGDG…VDVIELVGNS (243 aa)) lie on the Extracellular side of the membrane. Positions 64 to 112 (LTRTYNENESLKKQLYQLEVKSNEVESLKTENEQLRQLLDMKSKLQATK) form a coiled coil.

Belongs to the MreC family. Homodimer. Interacts with a number of proteins in the elongasome, including PBP1a (pbpA), PBP1b, PBP2a, PBP2b (penA), StkP, MltG, MreD and RodZ.

Its subcellular location is the cell membrane. In terms of biological role, involved in formation and maintenance of cell shape, probably part of the elongasome which synthesizes peripheral peptidoglycan (PG). This Streptococcus pneumoniae (strain ATCC BAA-255 / R6) protein is Cell shape-determining protein MreC.